A 594-amino-acid chain; its full sequence is Neopentalenolactone D synthase (594 aa).

FAD-binding positions include 64-65 (IG), 86-87 (DK), 94-95 (TW), 106-107 (DV), tyrosine 112, valine 156, and methionine 494.

It belongs to the FAD-binding monooxygenase family. FAD serves as cofactor.

The enzyme catalyses 1-deoxy-11-oxopentalenate + NADPH + O2 + H(+) = neopentalenolactone D + NADP(+) + H2O. Its pathway is antibiotic biosynthesis; neopentalenolactone biosynthesis. Catalyzes the flavin-dependent Baeyer-Villiger oxidation of 1-deoxy-11-oxopentalenic acid to neopentalenolactone D in the biosynthesis of neopentalenolactone antibiotic. In Streptomyces avermitilis (strain ATCC 31267 / DSM 46492 / JCM 5070 / NBRC 14893 / NCIMB 12804 / NRRL 8165 / MA-4680), this protein is Neopentalenolactone D synthase (ptlE).